The chain runs to 698 residues: DNA ligase (698 aa).

NAD(+)-binding positions include 40 to 44, 89 to 90, and glutamate 123; these read DDVYD and SL. The active-site N6-AMP-lysine intermediate is the lysine 125. Residues arginine 146, glutamate 184, lysine 300, and lysine 324 each coordinate NAD(+). Residues cysteine 417, cysteine 420, cysteine 435, and cysteine 441 each contribute to the Zn(2+) site. The 81-residue stretch at 618–698 folds into the BRCT domain; it reads SSASPVAGKA…EWLALTGAAD (81 aa).

This sequence belongs to the NAD-dependent DNA ligase family. LigA subfamily. It depends on Mg(2+) as a cofactor. Mn(2+) serves as cofactor.

It catalyses the reaction NAD(+) + (deoxyribonucleotide)n-3'-hydroxyl + 5'-phospho-(deoxyribonucleotide)m = (deoxyribonucleotide)n+m + AMP + beta-nicotinamide D-nucleotide.. Functionally, DNA ligase that catalyzes the formation of phosphodiester linkages between 5'-phosphoryl and 3'-hydroxyl groups in double-stranded DNA using NAD as a coenzyme and as the energy source for the reaction. It is essential for DNA replication and repair of damaged DNA. The chain is DNA ligase from Paramagnetospirillum magneticum (strain ATCC 700264 / AMB-1) (Magnetospirillum magneticum).